The primary structure comprises 512 residues: MARAVHRSGLVALGIATALMASCAFAAKDVVVAVGSNFTTLDPYDANDTLSQAVAKSFYQGLFGLDKEMKLKNVLAESYTVSDDGITYTVKLREGIKFQDGTDFNAAAVKANLDRASDPANHLKRYNLYKNIAKTEAIDPTTVKITLKQPFSAFINILAHPATAMISPAALEKYGKEIGFYPVGTGPYELDTWNQTDFVKVKKFAGYWQPGLPKLDSITWRPVADNNTRAAMLQTGEAQFAFPIPYEQATLLEKNKNIELMASPSIMQRYISMNVTQKPFDNPKVREALNYAINRPALVKVAFAGYATPATGVVPPSIAYAQSYKPWPYDPVKARELLKEAGYPNGFSTTLWSSHNHSTAQKVLQFTQQQLAQVGIKAQVTAMDAGQRAAEVEGKGQKESGVRMFYTGWSASTGEADWALSPLFASQNWPPTLFNTAFYSNKQVDDFLAQALKTNDPAEKTRLYKAAQDIIWQESPWIPLVVEKLVSAHSKNLTGFWIMPDTGFSFEDADLQ.

Positions 1–26 (MARAVHRSGLVALGIATALMASCAFA) are cleaved as a signal peptide.

This sequence belongs to the bacterial solute-binding protein 5 family. The complex is composed of two ATP-binding proteins (GsiA), two transmembrane proteins (GsiC and GsiD) and a solute-binding protein (GsiB). In the presence of glutathione, interacts with the transmembrane proteins GsiC and GsiD.

The protein resides in the periplasm. Part of the ABC transporter complex GsiABCD involved in glutathione import. Binds glutathione. The sequence is that of Glutathione-binding protein GsiB from Escherichia coli (strain K12).